Here is a 728-residue protein sequence, read N- to C-terminus: UvrABC system protein C (728 aa).

One can recognise a GIY-YIG domain in the interval 16–95; it reads DSPGVYRFRD…IKEYDPRFNV (80 aa). The UVR domain maps to 208–243; sequence GTYLRRLERQMAEAAEEMEYERAARLRDDIGALKKA. Disordered regions lie at residues 473-535 and 689-728; these read ADGE…GRPK and VNTA…GQER. The segment covering 487–505 has biased composition (low complexity); sequence GDAAPNGDAAPNDGAAPDD.

It belongs to the UvrC family. In terms of assembly, interacts with UvrB in an incision complex.

It localises to the cytoplasm. Its function is as follows. The UvrABC repair system catalyzes the recognition and processing of DNA lesions. UvrC both incises the 5' and 3' sides of the lesion. The N-terminal half is responsible for the 3' incision and the C-terminal half is responsible for the 5' incision. The protein is UvrABC system protein C of Streptomyces coelicolor (strain ATCC BAA-471 / A3(2) / M145).